A 260-amino-acid polypeptide reads, in one-letter code: Thrombin-like enzyme 1 (260 aa).

The first 18 residues, 1–18 (MVLITVLANLLILQLSYA), serve as a signal peptide directing secretion. The propeptide occupies 19–24 (QKSSEL). Residues 25–251 (VIGGDECNIN…HLDWIQSIIA (227 aa)) form the Peptidase S1 domain. Disulfide bonds link C31-C165, C52-C68, C102-C258, C144-C212, C176-C191, and C202-C227. The active-site Charge relay system is the H67. N105 carries an N-linked (GlcNAc...) asparagine glycan. The active-site Charge relay system is the D112. N156 and N172 each carry an N-linked (GlcNAc...) asparagine glycan. S206 (charge relay system) is an active-site residue. N253 is a glycosylation site (N-linked (GlcNAc...) asparagine).

It belongs to the peptidase S1 family. Snake venom subfamily. In terms of assembly, monomer. In terms of tissue distribution, expressed by the venom gland.

The protein localises to the secreted. In terms of biological role, thrombin-like snake venom serine protease. The polypeptide is Thrombin-like enzyme 1 (Trimeresurus albolabris (White-lipped pit viper)).